The following is a 122-amino-acid chain: Large ribosomal subunit protein bL12 (122 aa).

The protein belongs to the bacterial ribosomal protein bL12 family. In terms of assembly, homodimer. Part of the ribosomal stalk of the 50S ribosomal subunit. Forms a multimeric L10(L12)X complex, where L10 forms an elongated spine to which 2 to 4 L12 dimers bind in a sequential fashion. Binds GTP-bound translation factors.

In terms of biological role, forms part of the ribosomal stalk which helps the ribosome interact with GTP-bound translation factors. Is thus essential for accurate translation. The protein is Large ribosomal subunit protein bL12 of Actinobacillus pleuropneumoniae serotype 5b (strain L20).